We begin with the raw amino-acid sequence, 532 residues long: Protein kinase domain-containing protein ppk9 (532 aa).

One can recognise a Protein kinase domain in the interval 23-274 (WLLGRTLGQG…VAEIMQHPWF (252 aa)). Residues 29–37 (LGQGNLAKV) and Lys52 contribute to the ATP site. The active-site Proton acceptor is the Asp145. The segment covering 316 to 346 (PSSSVGQIPQPTDHSALSPSKPMSISGTESP) has biased composition (polar residues). A disordered region spans residues 316–349 (PSSSVGQIPQPTDHSALSPSKPMSISGTESPNPD).

It localises to the cytoplasm. Its subcellular location is the nucleus. The protein localises to the cytoskeleton. The protein resides in the microtubule organizing center. It is found in the spindle pole body. The polypeptide is Protein kinase domain-containing protein ppk9 (ppk9) (Schizosaccharomyces pombe (strain 972 / ATCC 24843) (Fission yeast)).